A 1342-amino-acid chain; its full sequence is DNA-directed RNA polymerase subunit beta (1342 aa).

The protein belongs to the RNA polymerase beta chain family. As to quaternary structure, the RNAP catalytic core consists of 2 alpha, 1 beta, 1 beta' and 1 omega subunit. When a sigma factor is associated with the core the holoenzyme is formed, which can initiate transcription.

The enzyme catalyses RNA(n) + a ribonucleoside 5'-triphosphate = RNA(n+1) + diphosphate. In terms of biological role, DNA-dependent RNA polymerase catalyzes the transcription of DNA into RNA using the four ribonucleoside triphosphates as substrates. The chain is DNA-directed RNA polymerase subunit beta from Actinobacillus pleuropneumoniae serotype 5b (strain L20).